A 116-amino-acid chain; its full sequence is uncharacterized protein (116 aa).

2 consecutive transmembrane segments (helical) span residues 55–77 (LSYSYHVIVYLCVLCKVYILYSF) and 87–109 (FSYGSSLLYSLCSNLYIYIYAAL).

The protein localises to the membrane. This is an uncharacterized protein from Saccharomyces cerevisiae (strain ATCC 204508 / S288c) (Baker's yeast).